A 196-amino-acid polypeptide reads, in one-letter code: Dual-action ribosomal maturation protein DarP (196 aa).

This sequence belongs to the DarP family.

Its subcellular location is the cytoplasm. In terms of biological role, member of a network of 50S ribosomal subunit biogenesis factors which assembles along the 30S-50S interface, preventing incorrect 23S rRNA structures from forming. Promotes peptidyl transferase center (PTC) maturation. In Stenotrophomonas maltophilia (strain R551-3), this protein is Dual-action ribosomal maturation protein DarP.